The primary structure comprises 417 residues: Tyrosine aminotransferase (417 aa).

The residue at position 249 (Lys249) is an N6-(pyridoxal phosphate)lysine.

Belongs to the class-I pyridoxal-phosphate-dependent aminotransferase family. As to quaternary structure, homodimer. Pyridoxal 5'-phosphate serves as cofactor.

It catalyses the reaction L-tyrosine + 2-oxoglutarate = 3-(4-hydroxyphenyl)pyruvate + L-glutamate. The protein operates within amino-acid degradation; L-phenylalanine degradation; acetoacetate and fumarate from L-phenylalanine: step 2/6. Transaminase involved in tyrosine breakdown. Converts tyrosine to p-hydroxyphenylpyruvate. Has much lower affinity and transaminase activity towards phenylalanine. The chain is Tyrosine aminotransferase (tat) from Dictyostelium discoideum (Social amoeba).